A 207-amino-acid chain; its full sequence is Sodium/potassium-transporting ATPase subunit beta-1-interacting protein 1 (207 aa).

Helical transmembrane passes span 2 to 22 (GKCS…VAAL), 35 to 55 (APIL…FGTV), and 62 to 82 (LILY…IICF). N100 is a glycosylation site (N-linked (GlcNAc...) asparagine). The chain crosses the membrane as a helical span at residues 147 to 167 (ALSSALQIFLALFGFVFACYV).

It belongs to the NKAIN family. Interacts with ATP1B1 C-terminus. In terms of tissue distribution, detected in the brain only and specifically in neurons. Expressed in multiple regions such as cerebral cortex, thalamus, hippocampus, olfactory bulb and brainstem as well as in cerebellum with high expression in granular cell layer.

The protein localises to the cell membrane. This Mus musculus (Mouse) protein is Sodium/potassium-transporting ATPase subunit beta-1-interacting protein 1 (Nkain1).